A 108-amino-acid chain; its full sequence is Putative pterin-4-alpha-carbinolamine dehydratase (108 aa).

The protein belongs to the pterin-4-alpha-carbinolamine dehydratase family.

It catalyses the reaction (4aS,6R)-4a-hydroxy-L-erythro-5,6,7,8-tetrahydrobiopterin = (6R)-L-erythro-6,7-dihydrobiopterin + H2O. This Bordetella avium (strain 197N) protein is Putative pterin-4-alpha-carbinolamine dehydratase.